A 131-amino-acid chain; its full sequence is Phosphomevalonate dehydratase small subunit (131 aa).

The Proton acceptor role is filled by Ser62.

The protein belongs to the AcnX type II small subunit family. Heterodimer composed of a large subunit (PMDh-L) and a small subunit (PMDh-S).

The enzyme catalyses (R)-5-phosphomevalonate = (2E)-3-methyl-5-phosphooxypent-2-enoate + H2O. Its pathway is isoprenoid biosynthesis; isopentenyl diphosphate biosynthesis via mevalonate pathway. Functionally, component of a hydro-lyase that catalyzes the dehydration of mevalonate 5-phosphate (MVA5P) to form trans-anhydromevalonate 5-phosphate (tAHMP). Involved in the archaeal mevalonate (MVA) pathway, which provides fundamental precursors for isoprenoid biosynthesis, such as isopentenyl diphosphate (IPP) and dimethylallyl diphosphate (DMAPP). This Methanothermobacter thermautotrophicus (strain ATCC 29096 / DSM 1053 / JCM 10044 / NBRC 100330 / Delta H) (Methanobacterium thermoautotrophicum) protein is Phosphomevalonate dehydratase small subunit.